The sequence spans 196 residues: Lipoprotein signal peptidase (196 aa).

The next 3 helical transmembrane spans lie at 17 to 37 (SIIITLVIIDQLSKWWFIDNL), 73 to 93 (SNAIFLITNTLIVCYLYYLMI), and 96 to 116 (NTIGSFAGYSFVIGGAVGNLI). Catalysis depends on residues aspartate 126 and aspartate 144. Residues 135-155 (YSFPVFNLADCFITIGVIILI) form a helical membrane-spanning segment.

Belongs to the peptidase A8 family.

It is found in the cell inner membrane. The catalysed reaction is Release of signal peptides from bacterial membrane prolipoproteins. Hydrolyzes -Xaa-Yaa-Zaa-|-(S,diacylglyceryl)Cys-, in which Xaa is hydrophobic (preferably Leu), and Yaa (Ala or Ser) and Zaa (Gly or Ala) have small, neutral side chains.. It functions in the pathway protein modification; lipoprotein biosynthesis (signal peptide cleavage). Functionally, this protein specifically catalyzes the removal of signal peptides from prolipoproteins. This Rickettsia akari (strain Hartford) protein is Lipoprotein signal peptidase.